The following is a 389-amino-acid chain: Glutamate 5-kinase (389 aa).

Lys16 is a binding site for ATP. Positions 56, 143, and 155 each coordinate substrate. 175–176 (SD) provides a ligand contact to ATP. A PUA domain is found at 281–358 (AGELHVDEGA…AEIEAILGYA (78 aa)).

The protein belongs to the glutamate 5-kinase family.

It is found in the cytoplasm. The catalysed reaction is L-glutamate + ATP = L-glutamyl 5-phosphate + ADP. Its pathway is amino-acid biosynthesis; L-proline biosynthesis; L-glutamate 5-semialdehyde from L-glutamate: step 1/2. Functionally, catalyzes the transfer of a phosphate group to glutamate to form L-glutamate 5-phosphate. This is Glutamate 5-kinase from Rhizobium rhizogenes (strain K84 / ATCC BAA-868) (Agrobacterium radiobacter).